Here is a 429-residue protein sequence, read N- to C-terminus: uncharacterized protein (429 aa).

Over residues 1–12 (MSDSKEDIRNGQ) the composition is skewed to basic and acidic residues. 3 disordered regions span residues 1 to 63 (MSDS…APEA), 257 to 306 (RSRA…SDRM), and 320 to 429 (YRGY…SDSE). Over residues 328-362 (EENEEDDLGDFIAEEEEEEEQEEEQEEDEEDEEEV) the composition is skewed to acidic residues. Positions 369 to 378 (KGFDADKEAS) are enriched in basic and acidic residues.

The protein belongs to the LEO1 family.

It is found in the nucleus. This is an uncharacterized protein from Schizosaccharomyces pombe (strain 972 / ATCC 24843) (Fission yeast).